We begin with the raw amino-acid sequence, 78 residues long: Large ribosomal subunit protein bL28 (78 aa).

It belongs to the bacterial ribosomal protein bL28 family.

The sequence is that of Large ribosomal subunit protein bL28 from Prochlorococcus marinus (strain MIT 9515).